Consider the following 326-residue polypeptide: Tetraacyldisaccharide 4'-kinase (326 aa).

54-61 (SVGGTGKT) contacts ATP.

The protein belongs to the LpxK family.

The catalysed reaction is a lipid A disaccharide + ATP = a lipid IVA + ADP + H(+). Its pathway is glycolipid biosynthesis; lipid IV(A) biosynthesis; lipid IV(A) from (3R)-3-hydroxytetradecanoyl-[acyl-carrier-protein] and UDP-N-acetyl-alpha-D-glucosamine: step 6/6. Transfers the gamma-phosphate of ATP to the 4'-position of a tetraacyldisaccharide 1-phosphate intermediate (termed DS-1-P) to form tetraacyldisaccharide 1,4'-bis-phosphate (lipid IVA). This Rickettsia canadensis (strain McKiel) protein is Tetraacyldisaccharide 4'-kinase.